A 339-amino-acid polypeptide reads, in one-letter code: Ketol-acid reductoisomerase (NADP(+)) (339 aa).

The 182-residue stretch at 1-182 folds into the KARI N-terminal Rossmann domain; that stretch reads MRVYYDRDAD…GGGRSGIIET (182 aa). Residues 24 to 27, R48, S51, T53, and 83 to 86 contribute to the NADP(+) site; these read YGSQ and DELQ. Residue H108 is part of the active site. G134 serves as a coordination point for NADP(+). Residues 183 to 328 enclose the KARI C-terminal knotted domain; it reads SFREECETDL…EKLRAMMPWI (146 aa). Residues D191, E195, E227, and E231 each contribute to the Mg(2+) site. S252 is a substrate binding site.

It belongs to the ketol-acid reductoisomerase family. It depends on Mg(2+) as a cofactor.

It catalyses the reaction (2R)-2,3-dihydroxy-3-methylbutanoate + NADP(+) = (2S)-2-acetolactate + NADPH + H(+). It carries out the reaction (2R,3R)-2,3-dihydroxy-3-methylpentanoate + NADP(+) = (S)-2-ethyl-2-hydroxy-3-oxobutanoate + NADPH + H(+). The protein operates within amino-acid biosynthesis; L-isoleucine biosynthesis; L-isoleucine from 2-oxobutanoate: step 2/4. It functions in the pathway amino-acid biosynthesis; L-valine biosynthesis; L-valine from pyruvate: step 2/4. Functionally, involved in the biosynthesis of branched-chain amino acids (BCAA). Catalyzes an alkyl-migration followed by a ketol-acid reduction of (S)-2-acetolactate (S2AL) to yield (R)-2,3-dihydroxy-isovalerate. In the isomerase reaction, S2AL is rearranged via a Mg-dependent methyl migration to produce 3-hydroxy-3-methyl-2-ketobutyrate (HMKB). In the reductase reaction, this 2-ketoacid undergoes a metal-dependent reduction by NADPH to yield (R)-2,3-dihydroxy-isovalerate. This Paramagnetospirillum magneticum (strain ATCC 700264 / AMB-1) (Magnetospirillum magneticum) protein is Ketol-acid reductoisomerase (NADP(+)).